A 308-amino-acid chain; its full sequence is Ornithine carbamoyltransferase (308 aa).

Carbamoyl phosphate contacts are provided by residues 55–58, Gln82, Arg106, and 133–136; these read STRT and HPCQ. L-ornithine-binding positions include Asn164, Asp227, and 231–232; that span reads SM. Residues 267–268 and Arg295 contribute to the carbamoyl phosphate site; that span reads CL.

The protein belongs to the aspartate/ornithine carbamoyltransferase superfamily. OTCase family.

The protein resides in the cytoplasm. The catalysed reaction is carbamoyl phosphate + L-ornithine = L-citrulline + phosphate + H(+). The protein operates within amino-acid biosynthesis; L-arginine biosynthesis; L-arginine from L-ornithine and carbamoyl phosphate: step 1/3. Its function is as follows. Reversibly catalyzes the transfer of the carbamoyl group from carbamoyl phosphate (CP) to the N(epsilon) atom of ornithine (ORN) to produce L-citrulline. This is Ornithine carbamoyltransferase from Prochlorococcus marinus subsp. pastoris (strain CCMP1986 / NIES-2087 / MED4).